We begin with the raw amino-acid sequence, 216 residues long: Thiamine-phosphate synthase (216 aa).

4-amino-2-methyl-5-(diphosphooxymethyl)pyrimidine contacts are provided by residues 35–39 and N67; that span reads QLRDK. Mg(2+) is bound by residues D68 and D87. S106 is a binding site for 4-amino-2-methyl-5-(diphosphooxymethyl)pyrimidine. 2-[(2R,5Z)-2-carboxy-4-methylthiazol-5(2H)-ylidene]ethyl phosphate is bound at residue 132–134; the sequence is TSS. A 4-amino-2-methyl-5-(diphosphooxymethyl)pyrimidine-binding site is contributed by K135. Residues G163 and 183 to 184 contribute to the 2-[(2R,5Z)-2-carboxy-4-methylthiazol-5(2H)-ylidene]ethyl phosphate site; that span reads IS.

It belongs to the thiamine-phosphate synthase family. Mg(2+) is required as a cofactor.

It carries out the reaction 2-[(2R,5Z)-2-carboxy-4-methylthiazol-5(2H)-ylidene]ethyl phosphate + 4-amino-2-methyl-5-(diphosphooxymethyl)pyrimidine + 2 H(+) = thiamine phosphate + CO2 + diphosphate. The enzyme catalyses 2-(2-carboxy-4-methylthiazol-5-yl)ethyl phosphate + 4-amino-2-methyl-5-(diphosphooxymethyl)pyrimidine + 2 H(+) = thiamine phosphate + CO2 + diphosphate. It catalyses the reaction 4-methyl-5-(2-phosphooxyethyl)-thiazole + 4-amino-2-methyl-5-(diphosphooxymethyl)pyrimidine + H(+) = thiamine phosphate + diphosphate. Its pathway is cofactor biosynthesis; thiamine diphosphate biosynthesis; thiamine phosphate from 4-amino-2-methyl-5-diphosphomethylpyrimidine and 4-methyl-5-(2-phosphoethyl)-thiazole: step 1/1. In terms of biological role, condenses 4-methyl-5-(beta-hydroxyethyl)thiazole monophosphate (THZ-P) and 2-methyl-4-amino-5-hydroxymethyl pyrimidine pyrophosphate (HMP-PP) to form thiamine monophosphate (TMP). This Methanoregula boonei (strain DSM 21154 / JCM 14090 / 6A8) protein is Thiamine-phosphate synthase.